The primary structure comprises 354 residues: MSDIQLRHDWKHDEIEALFALPMNDLLFKAHSLHRQVFDPNEVQISRLLSIKTGACPEDCKYCPQSARYDTGLEKERLIEIEKVLTEARSAKAAGASRFCMGAAWRNPHARDMPYLKDMVSEVKAMGMETCMTLGMLSGTQAEELAEAGLDYYNHNLDTSPEYYGEIITTRTYQDRLDTLSNVRSAGMKVCSGGIVGMGEQASDRAGLLQQLANMEQHPDSVPINMLVKVAGTPFENLDDLDPLEFVRTIAVARIIMPHSRVRLSAGREKMTDEMQAMCFFAGANSIFYGCKLLTTNNPEENEDMTLFKRLGLHPEQGKYATVEDDKEVMAKASAKANAIKDKQSGAFYDAGAL.

The Radical SAM core domain maps to 41 to 265; that stretch reads NEVQISRLLS…IMPHSRVRLS (225 aa). Residues C56, C60, and C63 each coordinate [4Fe-4S] cluster. Residues C100, C131, C191, and R263 each contribute to the [2Fe-2S] cluster site.

Belongs to the radical SAM superfamily. Biotin synthase family. As to quaternary structure, homodimer. The cofactor is [4Fe-4S] cluster. Requires [2Fe-2S] cluster as cofactor.

The enzyme catalyses (4R,5S)-dethiobiotin + (sulfur carrier)-SH + 2 reduced [2Fe-2S]-[ferredoxin] + 2 S-adenosyl-L-methionine = (sulfur carrier)-H + biotin + 2 5'-deoxyadenosine + 2 L-methionine + 2 oxidized [2Fe-2S]-[ferredoxin]. The protein operates within cofactor biosynthesis; biotin biosynthesis; biotin from 7,8-diaminononanoate: step 2/2. Catalyzes the conversion of dethiobiotin (DTB) to biotin by the insertion of a sulfur atom into dethiobiotin via a radical-based mechanism. This Shewanella sediminis (strain HAW-EB3) protein is Biotin synthase.